A 429-amino-acid polypeptide reads, in one-letter code: MIELDINASDKSLSHRAVIFSLLAQKPCVVRNFLMGEDCLSSLEIAQNLGAKVENIAKNSFKITPPTALKEPNKILNCNNSGTSMRLYSGLLSAQKGLFVLSGDNSLNARPMKRIIEPLKAFGAKILGREDNHFAPLAILGSPLKACDYESPIASAQVKSAFILSALQAQGSSTYKENELSRNHTEIMLKSLGANIQNQNGVLTILPLEKPLEAFDFTIANDPSSAFFFALSCAITPKSRLLLKNVLLNPTRIEAFEALKKMGASIEYAIQSKDLEMIGDIYIEHAPLKAISIEQNIASLIDEIPALSIAMLFAKGKSMVKNAKDLRSKESDRIKAVVSNFKALGIECEEFEDGFCIEGLEDISQLKQRFSQKKPPLIQSFNDHRIAMSFAILTLALPLEIDNLECANISFPQFKRLLNLFKKRSFNGN.

Positions 11, 12, and 16 each coordinate 3-phosphoshikimate. Lys-11 serves as a coordination point for phosphoenolpyruvate. Gly-82 and Arg-110 together coordinate phosphoenolpyruvate. 3-phosphoshikimate-binding residues include Ser-155, Gln-157, Asp-302, and Lys-329. Gln-157 provides a ligand contact to phosphoenolpyruvate. The active-site Proton acceptor is Asp-302. Residues Arg-333 and Arg-385 each coordinate phosphoenolpyruvate.

It belongs to the EPSP synthase family. As to quaternary structure, monomer.

It localises to the cytoplasm. It catalyses the reaction 3-phosphoshikimate + phosphoenolpyruvate = 5-O-(1-carboxyvinyl)-3-phosphoshikimate + phosphate. It participates in metabolic intermediate biosynthesis; chorismate biosynthesis; chorismate from D-erythrose 4-phosphate and phosphoenolpyruvate: step 6/7. Its function is as follows. Catalyzes the transfer of the enolpyruvyl moiety of phosphoenolpyruvate (PEP) to the 5-hydroxyl of shikimate-3-phosphate (S3P) to produce enolpyruvyl shikimate-3-phosphate and inorganic phosphate. This Helicobacter pylori (strain Shi470) protein is 3-phosphoshikimate 1-carboxyvinyltransferase.